The primary structure comprises 143 residues: Ribosome maturation factor RimP (143 aa).

It belongs to the RimP family.

The protein localises to the cytoplasm. Functionally, required for maturation of 30S ribosomal subunits. The protein is Ribosome maturation factor RimP of Borrelia turicatae (strain 91E135).